Reading from the N-terminus, the 1526-residue chain is DNA topoisomerase 2-alpha (1526 aa).

An N-acetylmethionine modification is found at Met1. The segment at Met1–Glu21 is disordered. Ser4 carries the post-translational modification Phosphoserine. Lys17 is covalently cross-linked (Glycyl lysine isopeptide (Lys-Gly) (interchain with G-Cter in SUMO2)). Residues Asn90, Asn119, and Ser147 to Asn149 contribute to the ATP site. Glycyl lysine isopeptide (Lys-Gly) (interchain with G-Cter in SUMO2) cross-links involve residues Lys155 and Lys156. Gly160–Lys167 lines the ATP pocket. Lys260 is covalently cross-linked (Glycyl lysine isopeptide (Lys-Gly) (interchain with G-Cter in SUMO2)). Position 281 is a phosphothreonine (Thr281). An interaction with DNA region spans residues Lys341–Lys343. Lys351 is covalently cross-linked (Glycyl lysine isopeptide (Lys-Gly) (interchain with G-Cter in SUMO2)). Position 375 to 377 (Gln375 to Lys377) interacts with ATP. Glycyl lysine isopeptide (Lys-Gly) (interchain with G-Cter in SUMO2) cross-links involve residues Lys385, Lys396, Lys415, Lys417, Lys424, and Lys439. A Toprim domain is found at Cys454–Glu571. Glu460 serves as a coordination point for Mg(2+). Residues Lys465, Lys479, and Lys528 each participate in a glycyl lysine isopeptide (Lys-Gly) (interchain with G-Cter in SUMO2) cross-link. 2 residues coordinate Mg(2+): Asp540 and Asp542. Glycyl lysine isopeptide (Lys-Gly) (interchain with G-Cter in SUMO2) cross-links involve residues Lys583, Lys598, Lys613, Lys621, Lys624, Lys631, Lys638, Lys654, Lys661, and Lys675. A Topo IIA-type catalytic domain is found at Ile714 to Leu1166. Catalysis depends on Tyr804, which acts as the O-(5'-phospho-DNA)-tyrosine intermediate. Positions Lys989–Ser998 are interaction with DNA. Residue Lys1074 forms a Glycyl lysine isopeptide (Lys-Gly) (interchain with G-Cter in SUMO2) linkage. 2 disordered regions span residues Trp1089–Gly1117 and Glu1180–Gln1217. The segment covering Asp1098–Asn1109 has biased composition (acidic residues). Residue Ser1105 is modified to Phosphoserine; by CK1. Glycyl lysine isopeptide (Lys-Gly) (interchain with G-Cter in SUMO2) cross-links involve residues Lys1191 and Lys1199. Ser1208 is modified (phosphoserine). Lys1223 is covalently cross-linked (Glycyl lysine isopeptide (Lys-Gly) (interchain with G-Cter in SUMO2)). The interval Lys1233–Phe1526 is disordered. Lys1235 participates in a covalent cross-link: Glycyl lysine isopeptide (Lys-Gly) (interchain with G-Cter in SUMO1); alternate. Lys1235 is covalently cross-linked (Glycyl lysine isopeptide (Lys-Gly) (interchain with G-Cter in SUMO2); alternate). Thr1242 is modified (phosphothreonine). A Glycyl lysine isopeptide (Lys-Gly) (interchain with G-Cter in SUMO2) cross-link involves residue Lys1254. The segment covering Gln1255 to Pro1265 has biased composition (basic and acidic residues). Glycyl lysine isopeptide (Lys-Gly) (interchain with G-Cter in SUMO2) cross-links involve residues Lys1271, Lys1278, and Lys1281. Ser1290, Ser1292, Ser1294, and Ser1297 each carry phosphoserine. Residue Thr1322 is modified to Phosphothreonine. Acidic residues predominate over residues Leu1325 to Phe1344. 2 positions are modified to phosphoserine: Ser1327 and Ser1332. Thr1349 carries the post-translational modification Phosphothreonine. Glycyl lysine isopeptide (Lys-Gly) (interchain with G-Cter in SUMO2) cross-links involve residues Lys1358, Lys1362, and Lys1368. Residues Ser1369 and Ser1372 each carry the phosphoserine modification. A Glycyl lysine isopeptide (Lys-Gly) (interchain with G-Cter in SUMO2) cross-link involves residue Lys1380. Residues Ser1382 and Ser1386 each carry the phosphoserine modification. Residues Ser1405–Gly1426 show a composition bias toward low complexity. Lys1417 is covalently cross-linked (Glycyl lysine isopeptide (Lys-Gly) (interchain with G-Cter in SUMO2); alternate). An N6-acetyllysine; alternate modification is found at Lys1417. The interval Lys1428–Lys1434 is interaction with PLSCR1. Lys1437 is covalently cross-linked (Glycyl lysine isopeptide (Lys-Gly) (interchain with G-Cter in SUMO2); alternate). Position 1437 is an N6-acetyllysine; alternate (Lys1437). Residues Lys1449 and Lys1454 each participate in a glycyl lysine isopeptide (Lys-Gly) (interchain with G-Cter in SUMO2) cross-link. A phosphoserine mark is found at Ser1464, Ser1466, Ser1469, and Ser1471. Glycyl lysine isopeptide (Lys-Gly) (interchain with G-Cter in SUMO2) cross-links involve residues Lys1479 and Lys1487. A compositionally biased stretch (basic and acidic residues) spans Ser1486–Leu1497. Residue Ser1520 is modified to Phosphoserine.

This sequence belongs to the type II topoisomerase family. As to quaternary structure, homodimer. Interacts with COPS5. Interacts with RECQL5; this stimulates DNA decatenation. Interacts with SETMAR; stimulates the topoisomerase activity. Interacts with DHX9; this interaction occurs in a E2 enzyme UBE2I- and RNA-dependent manner, negatively regulates DHX9-mediated double-stranded DNA and RNA duplex helicase activity and stimulates TOP2A-mediated supercoiled DNA relaxation activity. Interacts with HNRNPU (via C-terminus); this interaction protects the topoisomerase TOP2A from degradation and positively regulates the relaxation of supercoiled DNA in a RNA-dependent manner. Interacts with MCM3AP. Interacts with ERCC6. Interacts with PLSCR1. Interacts with GCNA; this interaction allows the resolution of topoisomerase II (TOP2A) DNA-protein cross-links. Interacts with POL1RA/RPA1 (via dock II) and UBTF in the context of Pol I complex; may assist Pol I transcription initiation by releasing supercoils occurring during DNA unwinding. Interacts with TPRN; TPRN interacts with a number of DNA damage response proteins, is recruited to sites of DNA damage and may play a role in DNA damage repair. Requires Mg(2+) as cofactor. Mn(2+) is required as a cofactor. It depends on Ca(2+) as a cofactor. Phosphorylation has no effect on catalytic activity. However, phosphorylation at Ser-1105 by CSNK1D/CK1 promotes DNA cleavable complex formation.

It is found in the cytoplasm. Its subcellular location is the nucleus. The protein resides in the nucleoplasm. The protein localises to the nucleolus. The catalysed reaction is ATP-dependent breakage, passage and rejoining of double-stranded DNA.. Functionally, key decatenating enzyme that alters DNA topology by binding to two double-stranded DNA molecules, generating a double-stranded break in one of the strands, passing the intact strand through the broken strand, and religating the broken strand. May play a role in regulating the period length of BMAL1 transcriptional oscillation. The polypeptide is DNA topoisomerase 2-alpha (TOP2A) (Cricetulus griseus (Chinese hamster)).